Reading from the N-terminus, the 339-residue chain is ADP-L-glycero-D-manno-heptose-6-epimerase (339 aa).

NADP(+)-binding positions include 11–12, 32–33, K39, K54, 75–79, and N92; these read FI, DD, and EGACS. The Proton acceptor role is filled by Y139. K143 contributes to the NADP(+) binding site. A substrate-binding site is contributed by N170. NADP(+)-binding residues include V171 and K179. The active-site Proton acceptor is the K179. Substrate contacts are provided by residues R181, H188, 202 to 205, R215, and Y294; that span reads FGEY.

The protein belongs to the NAD(P)-dependent epimerase/dehydratase family. HldD subfamily. In terms of assembly, homopentamer. NADP(+) serves as cofactor.

The catalysed reaction is ADP-D-glycero-beta-D-manno-heptose = ADP-L-glycero-beta-D-manno-heptose. It participates in nucleotide-sugar biosynthesis; ADP-L-glycero-beta-D-manno-heptose biosynthesis; ADP-L-glycero-beta-D-manno-heptose from D-glycero-beta-D-manno-heptose 7-phosphate: step 4/4. Catalyzes the interconversion between ADP-D-glycero-beta-D-manno-heptose and ADP-L-glycero-beta-D-manno-heptose via an epimerization at carbon 6 of the heptose. This Polynucleobacter necessarius subsp. necessarius (strain STIR1) protein is ADP-L-glycero-D-manno-heptose-6-epimerase.